The following is a 124-amino-acid chain: Large ribosomal subunit protein bL12 (124 aa).

The protein belongs to the bacterial ribosomal protein bL12 family. In terms of assembly, homodimer. Part of the ribosomal stalk of the 50S ribosomal subunit. Forms a multimeric L10(L12)X complex, where L10 forms an elongated spine to which 2 to 4 L12 dimers bind in a sequential fashion. Binds GTP-bound translation factors.

Forms part of the ribosomal stalk which helps the ribosome interact with GTP-bound translation factors. Is thus essential for accurate translation. In Borreliella burgdorferi (strain ATCC 35210 / DSM 4680 / CIP 102532 / B31) (Borrelia burgdorferi), this protein is Large ribosomal subunit protein bL12.